Consider the following 101-residue polypeptide: Small ribosomal subunit protein uS14 (101 aa).

Belongs to the universal ribosomal protein uS14 family. Part of the 30S ribosomal subunit. Contacts proteins S3 and S10.

Functionally, binds 16S rRNA, required for the assembly of 30S particles and may also be responsible for determining the conformation of the 16S rRNA at the A site. This Delftia acidovorans (strain DSM 14801 / SPH-1) protein is Small ribosomal subunit protein uS14.